We begin with the raw amino-acid sequence, 405 residues long: Elongation factor Tu (405 aa).

One can recognise a tr-type G domain in the interval 10–213 (KEHVNVGTIG…AMDEYIPTPE (204 aa)). Residues 19 to 26 (GHVDHGKS) are G1. 19-26 (GHVDHGKS) lines the GTP pocket. Residue serine 26 participates in Mg(2+) binding. Positions 64–68 (GITIN) are G2. The G3 stretch occupies residues 85–88 (DCPG). GTP contacts are provided by residues 85–89 (DCPGH) and 140–143 (NKCD). The interval 140-143 (NKCD) is G4. The segment at 178–180 (SAL) is G5.

It belongs to the TRAFAC class translation factor GTPase superfamily. Classic translation factor GTPase family. EF-Tu/EF-1A subfamily. In terms of assembly, monomer.

Its subcellular location is the cytoplasm. It catalyses the reaction GTP + H2O = GDP + phosphate + H(+). GTP hydrolase that promotes the GTP-dependent binding of aminoacyl-tRNA to the A-site of ribosomes during protein biosynthesis. The chain is Elongation factor Tu from Aquifex pyrophilus.